The sequence spans 369 residues: PLRPGPATLGVLLGSDCPHPAVCEGCQRPISDRFLMRVNESSWHEECLQCAACQQALTTSCYFRDRKLYCKQDYQQLFAAKCSGCMEKIAPTEFVMRALECVYHLGCFCCCVCERQLRKGDEFVLKEGQLLCKGDYEKEKDLLSSVSPDESDSVKSEDEDGDMKPAKGQGSQSKGGGDDGKDPRRPKRPRTILTTQQRRAFKASFEVSSKPCRKVRETLAAETGLSVRVVQVWFQNQRAKMKKLARRHQQQQEQQNSQRLGQEVLSSRMEGMMASYTPLAPPQQQIVAMEQSPCGSSDPFQQGLTPPQMPGDHMNPYGNDSIFHDIDSDTSLTSLSDCFLGSSDVGSLQARVGNPIDRLYSMQSSYFAS.

LIM zinc-binding domains follow at residues Cys-23–Asp-73 and Cys-82–Asp-135. The tract at residues Leu-143–Gln-196 is disordered. Residues Pro-186–Ala-245 constitute a DNA-binding region (homeobox).

In terms of assembly, interacts with DHX9.

Its subcellular location is the nucleus. Transcription factor involved in the regulation of podocyte-expressed genes. Essential for the specification of dorsal limb fate at both the zeugopodal and autopodal levels. The polypeptide is LIM homeobox transcription factor 1-beta (LMX1B) (Mesocricetus auratus (Golden hamster)).